A 92-amino-acid chain; its full sequence is Probable Fe(2+)-trafficking protein (92 aa).

It belongs to the Fe(2+)-trafficking protein family.

Its function is as follows. Could be a mediator in iron transactions between iron acquisition and iron-requiring processes, such as synthesis and/or repair of Fe-S clusters in biosynthetic enzymes. The chain is Probable Fe(2+)-trafficking protein from Shewanella loihica (strain ATCC BAA-1088 / PV-4).